The chain runs to 583 residues: Ras-specific guanine nucleotide-releasing factor RalGPS2 (583 aa).

The Ras-GEF domain maps to 49-287 (TPEEYAGQIT…YKLSLKIEPG (239 aa)). A disordered region spans residues 283–314 (KIEPGTSTPRSAASREDLVGPEVGASPQSGRK). Residues Ser293, Ser296, Ser308, and Ser311 each carry the phosphoserine modification. The short motif at 324 to 327 (PQTP) is the PXXP element. Thr326 carries the phosphothreonine modification. A phosphoserine mark is found at Ser329 and Ser343. At Thr361 the chain carries Phosphothreonine. Residues 372–406 (DDSVMEPHAPSRGQAESSTLSSGISIGSSDGSELS) form a disordered region. A Phosphoserine modification is found at Ser374. A compositionally biased stretch (low complexity) spans 387 to 403 (ESSTLSSGISIGSSDGS). Ser422 is modified (phosphoserine). The PH domain occupies 457 to 569 (AVTIQGVLRR…WFKHLSAACQ (113 aa)). A required for stimulation of nucleotide exchange by RALA region spans residues 459–583 (TIQGVLRRKT…QVPTNLMTFE (125 aa)).

In terms of assembly, interacts with the SH3 domains of GRB2 and PLCG1. Interacts with RALA.

The protein localises to the cytoplasm. Its subcellular location is the cell membrane. Guanine nucleotide exchange factor for the small GTPase RALA. May be involved in cytoskeletal organization. May also be involved in the stimulation of transcription in a Ras-independent fashion. The sequence is that of Ras-specific guanine nucleotide-releasing factor RalGPS2 (RALGPS2) from Homo sapiens (Human).